A 445-amino-acid chain; its full sequence is Phosphoglucosamine mutase (445 aa).

S102 (phosphoserine intermediate) is an active-site residue. Mg(2+) contacts are provided by S102, D240, D242, and D244. S102 is modified (phosphoserine).

It belongs to the phosphohexose mutase family. Requires Mg(2+) as cofactor. Activated by phosphorylation.

The enzyme catalyses alpha-D-glucosamine 1-phosphate = D-glucosamine 6-phosphate. Functionally, catalyzes the conversion of glucosamine-6-phosphate to glucosamine-1-phosphate. In Mycolicibacterium gilvum (strain PYR-GCK) (Mycobacterium gilvum (strain PYR-GCK)), this protein is Phosphoglucosamine mutase.